The following is an 885-amino-acid chain: Alanine--tRNA ligase (885 aa).

Zn(2+) contacts are provided by H563, H567, C677, and H681. The segment at 848-868 is disordered; that stretch reads LGGKGGGGRPDRAQGGAPSLA.

Belongs to the class-II aminoacyl-tRNA synthetase family. It depends on Zn(2+) as a cofactor.

The protein resides in the cytoplasm. The catalysed reaction is tRNA(Ala) + L-alanine + ATP = L-alanyl-tRNA(Ala) + AMP + diphosphate. Its function is as follows. Catalyzes the attachment of alanine to tRNA(Ala) in a two-step reaction: alanine is first activated by ATP to form Ala-AMP and then transferred to the acceptor end of tRNA(Ala). Also edits incorrectly charged Ser-tRNA(Ala) and Gly-tRNA(Ala) via its editing domain. The chain is Alanine--tRNA ligase from Paracoccus denitrificans (strain Pd 1222).